A 620-amino-acid polypeptide reads, in one-letter code: Chaperone protein HscA homolog (620 aa).

The protein belongs to the heat shock protein 70 family.

Its function is as follows. Chaperone involved in the maturation of iron-sulfur cluster-containing proteins. Has a low intrinsic ATPase activity which is markedly stimulated by HscB. This chain is Chaperone protein HscA homolog, found in Shewanella sp. (strain MR-4).